The primary structure comprises 955 residues: Histone deacetylase 6 (955 aa).

Histone deacetylase regions lie at residues 15-337 (TLIG…YAPF) and 425-749 (METL…VLQN). The 1 role is filled by H146. H561 acts as the 2 in catalysis. A disordered region spans residues 815-840 (SIDMADQSSSSGSSSSSTRPSHNLEI). Residues 818-831 (MADQSSSSGSSSSS) are compositionally biased toward low complexity. The UBP-type zinc-finger motif lies at 853–951 (ATCPHLKEVK…SAAHESKFGE (99 aa)). Residues C855, H857, C875, C878, C887, C890, and C895 each coordinate Zn(2+). The segment at 896–898 (GRF) is ubiquitin binding. Residues H902, H906, H912, C925, and C928 each coordinate Zn(2+). The interval 924-931 (WCYPCDSY) is ubiquitin binding.

It belongs to the histone deacetylase family. HD type 2 subfamily. It depends on Zn(2+) as a cofactor.

The protein resides in the nucleus. The catalysed reaction is N(6)-acetyl-L-lysyl-[histone] + H2O = L-lysyl-[histone] + acetate. Functionally, probable histone deacetylase. Histone deacetylases are responsible for the deacetylation of lysine residues on the N-terminal part of the core histones (H2A, H2B, H3 and H4). Histone deacetylation gives a tag for epigenetic repression and plays an important role in transcriptional regulation, cell cycle progression and developmental events. Histone deacetylases act via the formation of large multiprotein complexes. This Caenorhabditis elegans protein is Histone deacetylase 6 (hda-6).